Consider the following 273-residue polypeptide: 4-hydroxybenzoate octaprenyltransferase (273 aa).

Helical transmembrane passes span 7 to 27 (IGIY…SEGF), 30 to 50 (LKLL…GCVI), 83 to 103 (FFVL…WLTI), 122 to 142 (WTYF…LMAF), 146 to 166 (LNEI…WTVI), 197 to 217 (LIIG…SNVF), 221 to 241 (ISYH…QYLI), and 253 to 273 (FLHN…SVGL).

It belongs to the UbiA prenyltransferase family. Mg(2+) serves as cofactor.

The protein localises to the cell inner membrane. It catalyses the reaction all-trans-octaprenyl diphosphate + 4-hydroxybenzoate = 4-hydroxy-3-(all-trans-octaprenyl)benzoate + diphosphate. It participates in cofactor biosynthesis; ubiquinone biosynthesis. Catalyzes the prenylation of para-hydroxybenzoate (PHB) with an all-trans polyprenyl group. Mediates the second step in the final reaction sequence of ubiquinone-8 (UQ-8) biosynthesis, which is the condensation of the polyisoprenoid side chain with PHB, generating the first membrane-bound Q intermediate 3-octaprenyl-4-hydroxybenzoate. This Vesicomyosocius okutanii subsp. Calyptogena okutanii (strain HA) protein is 4-hydroxybenzoate octaprenyltransferase.